We begin with the raw amino-acid sequence, 129 residues long: MKYFVVALALVAAFACIAESKPAESEHELAEVEEENELADLEDAVWLEHLADLSDLEEARGFFGNTWKKIKGKADKIMLKKAVKLMVKKEGISKEEAQAKVDAMSKKQIRLYLLKYYGKKALQKASEKL.

The first 20 residues, 1-20, serve as a signal peptide directing secretion; it reads MKYFVVALALVAAFACIAES. The propeptide occupies 21–60; that stretch reads KPAESEHELAEVEEENELADLEDAVWLEHLADLSDLEEAR. Residues 57 to 60 carry the Processing quadruplet motif motif; that stretch reads EEAR.

Post-translationally, cleavage of the propeptide depends on the processing quadruplet motif (XXXR, with at least one of X being E). Expressed by the venom gland.

Its subcellular location is the secreted. In terms of biological role, insecticidal, cytolytic and antimicrobial peptide. Forms voltage-dependent, ion-permeable channels in membranes. At high concentration causes cell membrane lysis. The sequence is that of M-zodatoxin-Lt8b (cit 1-2) from Lachesana tarabaevi (Spider).